A 957-amino-acid polypeptide reads, in one-letter code: Bifunctional glutamine synthetase adenylyltransferase/adenylyl-removing enzyme (957 aa).

Positions Met-1 to Glu-447 are adenylyl removase. The adenylyl transferase stretch occupies residues Val-454–Glu-957.

The protein belongs to the GlnE family. Mg(2+) serves as cofactor.

It catalyses the reaction [glutamine synthetase]-O(4)-(5'-adenylyl)-L-tyrosine + phosphate = [glutamine synthetase]-L-tyrosine + ADP. It carries out the reaction [glutamine synthetase]-L-tyrosine + ATP = [glutamine synthetase]-O(4)-(5'-adenylyl)-L-tyrosine + diphosphate. Involved in the regulation of glutamine synthetase GlnA, a key enzyme in the process to assimilate ammonia. When cellular nitrogen levels are high, the C-terminal adenylyl transferase (AT) inactivates GlnA by covalent transfer of an adenylyl group from ATP to specific tyrosine residue of GlnA, thus reducing its activity. Conversely, when nitrogen levels are low, the N-terminal adenylyl removase (AR) activates GlnA by removing the adenylyl group by phosphorolysis, increasing its activity. The regulatory region of GlnE binds the signal transduction protein PII (GlnB) which indicates the nitrogen status of the cell. The polypeptide is Bifunctional glutamine synthetase adenylyltransferase/adenylyl-removing enzyme (Haemophilus ducreyi (strain 35000HP / ATCC 700724)).